Consider the following 48-residue polypeptide: Large ribosomal subunit protein bL33B (48 aa).

This sequence belongs to the bacterial ribosomal protein bL33 family.

This Streptococcus thermophilus (strain CNRZ 1066) protein is Large ribosomal subunit protein bL33B.